The primary structure comprises 463 residues: Glutamate--tRNA ligase 2 (463 aa).

Residues 10–20 (PSPTGFLHIGS) carry the 'HIGH' region motif. The short motif at 239-243 (KLSKR) is the 'KMSKS' region element. Lys-242 serves as a coordination point for ATP.

It belongs to the class-I aminoacyl-tRNA synthetase family. Glutamate--tRNA ligase type 1 subfamily. In terms of assembly, monomer.

Its subcellular location is the cytoplasm. The enzyme catalyses tRNA(Glu) + L-glutamate + ATP = L-glutamyl-tRNA(Glu) + AMP + diphosphate. Its function is as follows. Catalyzes the attachment of glutamate to tRNA(Glu) in a two-step reaction: glutamate is first activated by ATP to form Glu-AMP and then transferred to the acceptor end of tRNA(Glu). In Rickettsia felis (strain ATCC VR-1525 / URRWXCal2) (Rickettsia azadi), this protein is Glutamate--tRNA ligase 2.